Here is a 232-residue protein sequence, read N- to C-terminus: Ubiquinone biosynthesis O-methyltransferase (232 aa).

Residues R36, G55, D76, and L120 each coordinate S-adenosyl-L-methionine.

It belongs to the methyltransferase superfamily. UbiG/COQ3 family.

It catalyses the reaction a 3-demethylubiquinol + S-adenosyl-L-methionine = a ubiquinol + S-adenosyl-L-homocysteine + H(+). It carries out the reaction a 3-(all-trans-polyprenyl)benzene-1,2-diol + S-adenosyl-L-methionine = a 2-methoxy-6-(all-trans-polyprenyl)phenol + S-adenosyl-L-homocysteine + H(+). Its pathway is cofactor biosynthesis; ubiquinone biosynthesis. Functionally, O-methyltransferase that catalyzes the 2 O-methylation steps in the ubiquinone biosynthetic pathway. The chain is Ubiquinone biosynthesis O-methyltransferase from Pseudomonas putida (strain GB-1).